The chain runs to 1118 residues: DNA mismatch repair protein MSH1, mitochondrial (1118 aa).

Residue 768–775 coordinates ATP; that stretch reads GPNGGGKS.

It belongs to the DNA mismatch repair MutS family.

The protein resides in the mitochondrion. It is found in the plastid. Its subcellular location is the chloroplast. Its function is as follows. DNA mismatch repair protein specifically involved in maintenance of mitochondrial genome configuration by controlling specific rearranged portion. Functions by suppressing asymmetric recombination at some repeat pairs. The sequence is that of DNA mismatch repair protein MSH1, mitochondrial (MSH1) from Arabidopsis thaliana (Mouse-ear cress).